Reading from the N-terminus, the 91-residue chain is AIDCKTVDAALVPCVPYLTGGGTPTTQCCSGVSSIKTMAGTPQDKKDACNCVKAAANRYPNIRDDVAQALPVKCNVQLDIPVSRTTNCDAI.

Disulfide bonds link C4–C51, C14–C28, C29–C74, and C49–C88.

In terms of tissue distribution, expressed in seeds (at protein level).

In terms of biological role, plant non-specific lipid-transfer proteins transfer phospholipids as well as galactolipids across membranes. May play a role in wax or cutin deposition in the cell walls of expanding epidermal cells and certain secretory tissues. Binds to both saturated and unsaturated lipids, with the highest binding efficiency for linoleic acid, followed by linolenic acid. In Foeniculum vulgare (Fennel), this protein is Non-specific lipid-transfer protein 1.